The chain runs to 458 residues: Probable plasmid replicative DNA helicase (458 aa).

Residues Lys-194 to Trp-458 form the SF4 helicase domain. Ala-225 to Thr-232 is a binding site for ATP.

It belongs to the helicase family. DnaB subfamily. As to quaternary structure, homohexamer.

It catalyses the reaction Couples ATP hydrolysis with the unwinding of duplex DNA at the replication fork by translocating in the 5'-3' direction. This creates two antiparallel DNA single strands (ssDNA). The leading ssDNA polymer is the template for DNA polymerase III holoenzyme which synthesizes a continuous strand.. The catalysed reaction is ATP + H2O = ADP + phosphate + H(+). In terms of biological role, a replicative DNA helicase, it participates in initiation and elongation during DNA replication. Travels ahead of the DNA replisome, separating dsDNA into templates for DNA synthesis. A processive ATP-dependent 5'-3' DNA helicase it has DNA-dependent ATPase activity. This chain is Probable plasmid replicative DNA helicase, found in Chlamydia psittaci (Chlamydophila psittaci).